The following is a 175-amino-acid chain: Gamma-crystallin B (175 aa).

Beta/gamma crystallin 'Greek key' domains follow at residues 2–40 (GKITFYEDRGFQGHCYECSSDCPNLQPYFSRCNSIRVDS) and 41–83 (GCWM…RLIP). A glycan (N-linked (Glc) (glycation) lysine; in vitro) is linked at K3. An intrachain disulfide couples C19 to C23. Residues 84 to 88 (QHTGT) form a connecting peptide region. 2 Beta/gamma crystallin 'Greek key' domains span residues 89–129 (FRMR…NVLE) and 130–172 (GSWV…RRVM).

Belongs to the beta/gamma-crystallin family.

Its function is as follows. Crystallins are the dominant structural components of the vertebrate eye lens. The protein is Gamma-crystallin B (CRYGB) of Bos taurus (Bovine).